A 1244-amino-acid chain; its full sequence is Ras-specific guanine nucleotide-releasing factor 1 (1244 aa).

One can recognise a PH 1 domain in the interval 22–129 (DGTRKGYLSK…WVAAIARASY (108 aa)). A Phosphoserine; by PLK2 modification is found at Ser-71. The IQ domain occupies 204–229 (KKIKKVQSFLRGWLCRRKWKNIIQDY). A DH domain is found at 240 to 426 (KRNQVVFSML…EELSRVMHDE (187 aa)). Residues 456-582 (TFVRQGSLIQ…WTSDIIQCVD (127 aa)) form the PH 2 domain. Phosphoserine; by PLK2 is present on residues Ser-575 and Ser-611. The N-terminal Ras-GEF domain occupies 629-743 (KVLQIRYASV…RRRKLSLNIP (115 aa)). Residues 707–730 (GDAPKSPRASRKFSSPPPLAIGTS) are disordered. Phosphoserine is present on Ser-739. Phosphoserine; by PLK2 is present on residues Ser-760 and Ser-781. The disordered stretch occupies residues 800–840 (TLEESSGFRKPTSDILKEESDDDQSDVDDTEVSPPTPKSFR). Residues 818–830 (ESDDDQSDVDDTE) show a composition bias toward acidic residues. Ser-854 carries the phosphoserine; by PLK2 modification. The Ras-GEF domain maps to 1009–1241 (SAMEIAEQLT…YEASLRIEPK (233 aa)).

As to quaternary structure, homooligomer and heterooligomer with RASGRF2. Interacts with USP8, thereby regulating its stability. Post-translationally, phosphorylated by PLK2, leading to ubiquitination and degradation by the proteasome. In terms of processing, ubiquitinated and degraded following phosphorylation by PLK2. Phosphorylated by SRC and LCK. Phosphorylation by LCK increases its capacity to stimulate the GDP/GTP exchange on Ras, whereas its phosphorylation by SRC seems not to have an effect on stimulation activity.

In terms of biological role, promotes the exchange of Ras-bound GDP by GTP. The sequence is that of Ras-specific guanine nucleotide-releasing factor 1 (Rasgrf1) from Rattus norvegicus (Rat).